Reading from the N-terminus, the 498-residue chain is Diacylglycerol O-acyltransferase 1 (498 aa).

Residues 1 to 66 are disordered; it reads MGDRGGAGSS…AHTRDKDRQT (66 aa). The Cytoplasmic portion of the chain corresponds to 1-92; that stretch reads MGDRGGAGSS…SLFSSDSGFS (92 aa). The involved in homomerization stretch occupies residues 1–96; sequence MGDRGGAGSS…SDSGFSNYRG (96 aa). Position 20 is a phosphoserine (Ser-20). Basic and acidic residues predominate over residues 58-68; the sequence is HTRDKDRQTSV. The chain crosses the membrane as a helical span at residues 93–127; sequence NYRGILNWCVVMLILSNARLSLENLIKYGILVDPI. Over 128-139 the chain is Lumenal; it reads QVVSLFLKDPYS. The interval 128–139 is extracellular loop 1 (EL1); sequence QVVSLFLKDPYS. The helical transmembrane segment at 140–165 threads the bilayer; it reads WPAPCLIIASNIFIVATFQIEKRLSV. An MBOAT fold region spans residues 140–498; it reads WPAPCLIIAS…VLNYDAPVGA (359 aa). Residues 166-170 are Cytoplasmic-facing; it reads GALTE. The helical transmembrane segment at 171-193 threads the bilayer; it reads QMGLLLHVVNLATIICFPAAVAL. Residues 194 to 200 lie on the Lumenal side of the membrane; that stretch reads LVESITP. The chain crosses the membrane as a helical span at residues 201–232; it reads VGSLFALASYSIIFLKLSSYRDVNLWCRQRRV. The Cytoplasmic segment spans residues 233 to 284; that stretch reads KAKAVSAGKKVSGAAAQNTVSYPDNLTYRDLYYFIFAPTLCYELNFPRSPRI. An intracellular loop 1 (IL1) region spans residues 235–287; sequence KAVSAGKKVSGAAAQNTVSYPDNLTYRDLYYFIFAPTLCYELNFPRSPRIRKR. Residues 285–319 traverse the membrane as a helical segment; sequence RKRFLLRRVLEMLFFTQLQVGLIQQWMVPTIQNSM. The Lumenal portion of the chain corresponds to 320–326; sequence KPFKDMD. The helical transmembrane segment at 327 to 364 threads the bilayer; sequence YSRIIERLLKLAVPNHLIWLIFFYWLFHSCLNAVAELL. At 365-410 the chain is on the cytoplasmic side; it reads QFGDREFYRDWWNAESVTYFWQNWNIPVHKWCIRHFYKPMLRLGSN. An intracellular loop 2 (IL2) region spans residues 365-410; that stretch reads QFGDREFYRDWWNAESVTYFWQNWNIPVHKWCIRHFYKPMLRLGSN. Residues 371–377 carry the FYXDWWN motif motif; sequence FYRDWWN. Residues 385–393, Tyr-401, and Arg-415 contribute to the an acyl-CoA site; that span reads WQNWNIPVH. The amphipathic helix (AH) stretch occupies residues 391–405; it reads PVHKWCIRHFYKPML. Residues 411-431 traverse the membrane as a helical segment; the sequence is KWMARTGVFWASAFFHEYLVS. His-426 is an active-site residue. The Lumenal portion of the chain corresponds to 432–439; sequence IPLRMFRL. A helical membrane pass occupies residues 440–458; the sequence is WAFTAMMAQVPLAWIVNRF. Topologically, residues 459-460 are cytoplasmic; the sequence is FQ. Residues 461 to 492 traverse the membrane as a helical segment; sequence GNYGNAAVWVTLIIGQPVAVLMYVHDYYVLNY. Tyr-488 contributes to the an acyl-CoA binding site. Topologically, residues 493-498 are lumenal; the sequence is DAPVGA.

The protein belongs to the membrane-bound acyltransferase family. Sterol o-acyltransferase subfamily. In terms of assembly, homodimer or homotetramer; both forms have similar enzymatic activities.

It localises to the endoplasmic reticulum membrane. The catalysed reaction is an acyl-CoA + a 1,2-diacyl-sn-glycerol = a triacyl-sn-glycerol + CoA. The enzyme catalyses all-trans-retinol + an acyl-CoA = an all-trans-retinyl ester + CoA. It catalyses the reaction 2-(9Z-octadecenoyl)-glycerol + (9Z)-octadecenoyl-CoA = 1,2-di-(9Z-octadecenoyl)-sn-glycerol + CoA. It carries out the reaction 1,2-di-(9Z-octadecenoyl)-sn-glycerol + (9Z)-octadecenoyl-CoA = 1,2,3-tri-(9Z-octadecenoyl)-glycerol + CoA. The catalysed reaction is all-trans-retinol + hexadecanoyl-CoA = all-trans-retinyl hexadecanoate + CoA. The enzyme catalyses 1-O-(9Z-octadecenyl)-glycerol + (9Z)-octadecenoyl-CoA = 1-O-(9Z-octadecyl)-3-(9Z-octadecenoyl)-glycerol + CoA. It catalyses the reaction 1-O-(9Z-octadecyl)-3-(9Z-octadecenoyl)-glycerol + (9Z)-octadecenoyl-CoA = 1-O-(9Z-octadecenyl)-2,3-di-(9Z-octadecenoyl)glycerol + CoA. It carries out the reaction 1-(9Z-octadecenoyl)-glycerol + (9Z)-octadecenoyl-CoA = 1,2-di-(9Z-octadecenoyl)-glycerol + CoA. The catalysed reaction is 1,2-di-(9Z-octadecenoyl)-glycerol + (9Z)-octadecenoate + H(+) = 1,2,3-tri-(9Z-octadecenoyl)-glycerol + H2O. The enzyme catalyses 1-octadecanoyl-2-(5Z,8Z,11Z,14Z-eicosatetraenoyl)-sn-glycerol + (9Z)-octadecenoyl-CoA = 1-octadecanoyl-2-(5Z,8Z,11Z,14Z)-eicosatetraenoyl-3-(9Z)-octadecenoyl-sn-glycerol + CoA. It catalyses the reaction hexadecane-1,2-diol + 2 hexadecanoyl-CoA = 1,2-O,O-dihexadecanoyl-1,2-hexadecanediol + 2 CoA. It carries out the reaction hexadecane-1,2-diol + hexadecanoyl-CoA = 2-hydroxyhexadecyl hexadecanoate + CoA. The catalysed reaction is 2-(9Z-octadecenoyl)-glycerol + hexadecanoyl-CoA = 1-hexadecanoyl-2-(9Z-octadecenoyl)-sn-glycerol + CoA. The enzyme catalyses 1,2-di-(9Z-octadecenoyl)-sn-glycerol + hexadecanoyl-CoA = 1,2-di-(9Z)-octadecenoyl-3-hexadecanoyl-sn-glycerol + CoA. It catalyses the reaction hexadecan-1-ol + hexadecanoyl-CoA = hexadecanyl hexadecanoate + CoA. It carries out the reaction 13-cis-retinol + hexadecanoyl-CoA = 13-cis-retinyl hexadecanoate + CoA. The catalysed reaction is 1,3-di-(9Z-octadecenoyl)-glycerol + (9Z)-octadecenoyl-CoA = 1,2,3-tri-(9Z-octadecenoyl)-glycerol + CoA. The enzyme catalyses 2,3-di-(9Z)-octadecenoyl-sn-glycerol + (9Z)-octadecenoyl-CoA = 1,2,3-tri-(9Z-octadecenoyl)-glycerol + CoA. It functions in the pathway lipid metabolism; glycerolipid metabolism. In terms of biological role, catalyzes the terminal and only committed step in triacylglycerol synthesis by using diacylglycerol and fatty acyl CoA as substrates. Highly expressed in epithelial cells of the small intestine and its activity is essential for the absorption of dietary fats. In liver, plays a role in esterifying exogenous fatty acids to glycerol, and is required to synthesize fat for storage. Also present in female mammary glands, where it produces fat in the milk. May be involved in VLDL (very low density lipoprotein) assembly. In contrast to DGAT2 it is not essential for survival. Functions as the major acyl-CoA retinol acyltransferase (ARAT) in the skin, where it acts to maintain retinoid homeostasis and prevent retinoid toxicity leading to skin and hair disorders. Exhibits additional acyltransferase activities, includin acyl CoA:monoacylglycerol acyltransferase (MGAT), wax monoester and wax diester synthases. Also able to use 1-monoalkylglycerol (1-MAkG) as an acyl acceptor for the synthesis of monoalkyl-monoacylglycerol (MAMAG). The polypeptide is Diacylglycerol O-acyltransferase 1 (Rattus norvegicus (Rat)).